Here is a 333-residue protein sequence, read N- to C-terminus: Uroporphyrinogen decarboxylase (333 aa).

Residues 21–25, Asp-70, Tyr-139, Ser-194, and His-309 each bind substrate; that span reads RQVGR.

This sequence belongs to the uroporphyrinogen decarboxylase family. In terms of assembly, homodimer.

It localises to the cytoplasm. It catalyses the reaction uroporphyrinogen III + 4 H(+) = coproporphyrinogen III + 4 CO2. It functions in the pathway porphyrin-containing compound metabolism; protoporphyrin-IX biosynthesis; coproporphyrinogen-III from 5-aminolevulinate: step 4/4. Catalyzes the decarboxylation of four acetate groups of uroporphyrinogen-III to yield coproporphyrinogen-III. This Chlamydia abortus (strain DSM 27085 / S26/3) (Chlamydophila abortus) protein is Uroporphyrinogen decarboxylase.